Consider the following 429-residue polypeptide: Adenylosuccinate synthetase (429 aa).

GTP is bound by residues 13–19 and 41–43; these read GDEGKGK and GHT. Asp14 acts as the Proton acceptor in catalysis. Residues Asp14 and Gly41 each contribute to the Mg(2+) site. Residues 14 to 17, 39 to 42, Thr130, Arg144, Gln225, Thr240, and Arg304 contribute to the IMP site; these read DEGK and NAGH. His42 serves as the catalytic Proton donor. A substrate-binding site is contributed by 300–306; sequence ATTGRAR. GTP-binding positions include Arg306, 332–334, and 413–415; these read KLD and STG.

This sequence belongs to the adenylosuccinate synthetase family. In terms of assembly, homodimer. The cofactor is Mg(2+).

The protein localises to the cytoplasm. It catalyses the reaction IMP + L-aspartate + GTP = N(6)-(1,2-dicarboxyethyl)-AMP + GDP + phosphate + 2 H(+). Its pathway is purine metabolism; AMP biosynthesis via de novo pathway; AMP from IMP: step 1/2. In terms of biological role, plays an important role in the de novo pathway of purine nucleotide biosynthesis. Catalyzes the first committed step in the biosynthesis of AMP from IMP. The chain is Adenylosuccinate synthetase from Pseudomonas fluorescens (strain Pf0-1).